A 28-amino-acid polypeptide reads, in one-letter code: Gamma-conotoxin-like de7a (28 aa).

3 disulfides stabilise this stretch: C2–C18, C9–C22, and C17–C27. 4-hydroxyproline is present on P4. E13 and E16 each carry 4-carboxyglutamate. Serine amide is present on S28.

This sequence belongs to the conotoxin O1 superfamily. As to expression, expressed by the venom duct.

The protein resides in the secreted. Its function is as follows. Gamma-conotoxins may act on voltage-gated non-specific cation pacemaker channels (HCN). The polypeptide is Gamma-conotoxin-like de7a (Conasprella delessertii (Sozon's cone)).